The following is a 475-amino-acid chain: Ribulose bisphosphate carboxylase large chain (475 aa).

Residues 1–2 (MA) constitute a propeptide that is removed on maturation. P3 carries the post-translational modification N-acetylproline. Position 14 is an N6,N6,N6-trimethyllysine (K14). Residues N123 and T173 each coordinate substrate. The active-site Proton acceptor is K175. K177 is a binding site for substrate. K201, D203, and E204 together coordinate Mg(2+). Residue K201 is modified to N6-carboxylysine. H294 functions as the Proton acceptor in the catalytic mechanism. Substrate contacts are provided by R295, H327, and S379.

This sequence belongs to the RuBisCO large chain family. Type I subfamily. Heterohexadecamer of 8 large chains and 8 small chains; disulfide-linked. The disulfide link is formed within the large subunit homodimers. Requires Mg(2+) as cofactor. In terms of processing, the disulfide bond which can form in the large chain dimeric partners within the hexadecamer appears to be associated with oxidative stress and protein turnover.

It is found in the plastid. The protein localises to the chloroplast. The enzyme catalyses 2 (2R)-3-phosphoglycerate + 2 H(+) = D-ribulose 1,5-bisphosphate + CO2 + H2O. The catalysed reaction is D-ribulose 1,5-bisphosphate + O2 = 2-phosphoglycolate + (2R)-3-phosphoglycerate + 2 H(+). RuBisCO catalyzes two reactions: the carboxylation of D-ribulose 1,5-bisphosphate, the primary event in carbon dioxide fixation, as well as the oxidative fragmentation of the pentose substrate in the photorespiration process. Both reactions occur simultaneously and in competition at the same active site. The polypeptide is Ribulose bisphosphate carboxylase large chain (Oedogonium cardiacum (Filamentous green alga)).